Reading from the N-terminus, the 369-residue chain is S-(hydroxymethyl)glutathione dehydrogenase (369 aa).

Residues Cys-40, His-62, Cys-92, Cys-95, Cys-98, Cys-106, and Cys-169 each coordinate Zn(2+).

It belongs to the zinc-containing alcohol dehydrogenase family. Class-III subfamily. Homodimer. The cofactor is Zn(2+).

The protein resides in the cytoplasm. It carries out the reaction S-(hydroxymethyl)glutathione + NADP(+) = S-formylglutathione + NADPH + H(+). The catalysed reaction is S-(hydroxymethyl)glutathione + NAD(+) = S-formylglutathione + NADH + H(+). It catalyses the reaction a primary alcohol + NAD(+) = an aldehyde + NADH + H(+). The enzyme catalyses a secondary alcohol + NAD(+) = a ketone + NADH + H(+). It carries out the reaction S-nitrosoglutathione + NADH + H(+) = S-(hydroxysulfenamide)glutathione + NAD(+). Functionally, has high formaldehyde dehydrogenase activity in the presence of glutathione and catalyzes the oxidation of normal alcohols in a reaction that is not GSH-dependent. In addition, hemithiolacetals other than those formed from GSH, including omega-thiol fatty acids, also are substrates. Also acts as a S-nitroso-glutathione reductase by catalyzing the NADH-dependent reduction of S-nitrosoglutathione. The sequence is that of S-(hydroxymethyl)glutathione dehydrogenase (frmA) from Synechocystis sp. (strain ATCC 27184 / PCC 6803 / Kazusa).